A 194-amino-acid chain; its full sequence is Putative 3-methyladenine DNA glycosylase (194 aa).

The protein belongs to the DNA glycosylase MPG family.

The sequence is that of Putative 3-methyladenine DNA glycosylase from Mycolicibacterium fortuitum (Mycobacterium fortuitum).